The sequence spans 328 residues: tRNA U34 carboxymethyltransferase (328 aa).

Carboxy-S-adenosyl-L-methionine-binding positions include Lys91, Trp105, Lys110, Gly130, 181–182, Met196, Tyr200, and Arg315; that span reads IE.

It belongs to the class I-like SAM-binding methyltransferase superfamily. CmoB family. As to quaternary structure, homotetramer.

It carries out the reaction carboxy-S-adenosyl-L-methionine + 5-hydroxyuridine(34) in tRNA = 5-carboxymethoxyuridine(34) in tRNA + S-adenosyl-L-homocysteine + H(+). Catalyzes carboxymethyl transfer from carboxy-S-adenosyl-L-methionine (Cx-SAM) to 5-hydroxyuridine (ho5U) to form 5-carboxymethoxyuridine (cmo5U) at position 34 in tRNAs. This is tRNA U34 carboxymethyltransferase from Pectobacterium carotovorum subsp. carotovorum (strain PC1).